The primary structure comprises 977 residues: Dynamin-like GTPase OPA1, mitochondrial (977 aa).

A mitochondrion-targeting transit peptide spans 1–86 (MWRTKAAAAC…VKYGYQSYRN (86 aa)). The Mitochondrial matrix portion of the chain corresponds to 87–95 (FWLARLASR). The helical transmembrane segment at 96-112 (LLKIRYLILGSAVGGGY) threads the bilayer. Over 113–787 (TAKKTYDQWE…SVIEDMVGPD (675 aa)) the chain is Mitochondrial intermembrane. Residues 224–271 (KKVSDKEKIDQLQEELLRTQLKYQRMLERLEKENKELRKLVLQRDDKG) are a coiled coil. The 277-residue stretch at 302–578 (QDHLPRVVVV…FWKMVRESVE (277 aa)) folds into the Dynamin-type G domain. Residues 312-319 (GDQSAGKT) are G1 motif. Residues Ser315, Gly317, Lys318, Thr319, Ser320, and Gly334 each coordinate GTP. Thr319 contributes to the Mg(2+) binding site. Residues 338–341 (MMTR) form a G2 motif region. Mg(2+) contacts are provided by Thr340 and Asp415. Residues 415 to 418 (DLPG) are G3 motif. Residues 484–487 (TKVD) form a G4 motif region. 3 residues coordinate GTP: Lys485, Asp487, and Thr520. The G5 motif stretch occupies residues 518 to 521 (VVTG). Stalk region stretches follow at residues 606–853 (DRNE…IKDT) and 891–945 (CNDI…VKLL). The segment at 753-873 (SDKQQWDAAI…KTALNHCNLC (121 aa)) is paddle region. Residues 788–798 (WKKRWLYWISR) lie within the membrane without spanning it. Over 799 to 977 (TKEQNIRNET…AFIEALHQEK (179 aa)) the chain is Mitochondrial intermembrane. An intrachain disulfide couples Cys873 to Cys891. Positions 911–977 (LRQQLTNTEV…AFIEALHQEK (67 aa)) form a coiled coil.

The protein belongs to the TRAFAC class dynamin-like GTPase superfamily. Dynamin/Fzo/YdjA family. Oligomeric complex consisting of membrane-bound and soluble forms of OPA1. In terms of processing, cleaved by OMA1 or YME1L downstream of the transmembrane region in response to different signals to generate soluble forms. Cleaved by OMA1 at position S1 following stress conditions, generating the short soluble form (Dynamin-like GTPase OPA1, short form; S-OPA1).

Its subcellular location is the mitochondrion inner membrane. The protein localises to the mitochondrion intermembrane space. The enzyme catalyses GTP + H2O = GDP + phosphate + H(+). Its function is as follows. Dynamin-related GTPase that is essential for normal mitochondrial morphology by mediating fusion of the mitochondrial inner membranes, regulating cristae morphology and maintaining respiratory chain function. Exists in two forms: the transmembrane, long form (Dynamin-like GTPase OPA1, long form; L-OPA1), which is tethered to the inner mitochondrial membrane, and the short soluble form (Dynamin-like GTPase OPA1, short form; S-OPA1), which results from proteolytic cleavage and localizes in the intermembrane space. Both forms (L-OPA1 and S-OPA1) cooperate to catalyze the fusion of the mitochondrial inner membrane. The equilibrium between L-OPA1 and S-OPA1 is essential: excess levels of S-OPA1, produced by cleavage by OMA1 following loss of mitochondrial membrane potential, lead to an impaired equilibrium between L-OPA1 and S-OPA1, inhibiting mitochondrial fusion. The balance between L-OPA1 and S-OPA1 also influences cristae shape and morphology. Its role in mitochondrial morphology is required for mitochondrial genome maintenance. Constitutes the transmembrane long form (L-OPA1) that plays a central role in mitochondrial inner membrane fusion and cristae morphology. L-OPA1 and the soluble short form (S-OPA1) form higher-order helical assemblies that coordinate the fusion of mitochondrial inner membranes. Inner membrane-anchored L-OPA1 molecules initiate membrane remodeling by recruiting soluble S-OPA1 to rapidly polymerize into a flexible cylindrical scaffold encaging the mitochondrial inner membrane. Once at the membrane surface, the formation of S-OPA1 helices induce bilayer curvature. OPA1 dimerization through the paddle region, which inserts into cardiolipin-containing membrane, promotes GTP hydrolysis and the helical assembly of a flexible OPA1 lattice on the membrane, which drives membrane curvature and mitochondrial fusion. Plays a role in the maintenance and remodeling of mitochondrial cristae, some invaginations of the mitochondrial inner membrane that provide an increase in the surface area. Probably acts by forming helical filaments at the inside of inner membrane tubes with the shape and dimensions of crista junctions. Functionally, constitutes the soluble short form (S-OPA1) generated by cleavage by OMA1, which plays a central role in mitochondrial inner membrane fusion and cristae morphology. The transmembrane long form (L-OPA1) and the S-OPA1 form higher-order helical assemblies that coordinate the fusion of mitochondrial inner membranes. Inner membrane-anchored L-OPA1 molecules initiate membrane remodeling by recruiting soluble S-OPA1 to rapidly polymerize into a flexible cylindrical scaffold encaging the mitochondrial inner membrane. Once at the membrane surface, the formation of S-OPA1 helices induce bilayer curvature. OPA1 dimerization through the paddle region, which inserts into cardiolipin-containing membrane, promotes GTP hydrolysis and the helical assembly of a flexible OPA1 lattice on the membrane, which drives membrane curvature and mitochondrial fusion. Excess levels of S-OPA1 produced by cleavage by OMA1 following stress conditions that induce loss of mitochondrial membrane potential, lead to an impaired equilibrium between L-OPA1 and S-OPA1, thereby inhibiting mitochondrial fusion. Plays a role in the maintenance and remodeling of mitochondrial cristae, some invaginations of the mitochondrial inner membrane that provide an increase in the surface area. Probably acts by forming helical filaments at the inside of inner membrane tubes with the shape and dimensions of crista junctions. This chain is Dynamin-like GTPase OPA1, mitochondrial, found in Gallus gallus (Chicken).